Consider the following 333-residue polypeptide: Glycerol-3-phosphate dehydrogenase [NAD(P)+] (333 aa).

NADPH is bound by residues serine 10, tryptophan 11, and lysine 105. Residues lysine 105, glycine 136, and threonine 138 each contribute to the sn-glycerol 3-phosphate site. Residue alanine 140 coordinates NADPH. Sn-glycerol 3-phosphate-binding residues include lysine 191, aspartate 244, serine 254, arginine 255, and asparagine 256. Lysine 191 serves as the catalytic Proton acceptor. Residue arginine 255 participates in NADPH binding. Residues valine 279 and glutamate 281 each coordinate NADPH.

Belongs to the NAD-dependent glycerol-3-phosphate dehydrogenase family.

It is found in the cytoplasm. The catalysed reaction is sn-glycerol 3-phosphate + NAD(+) = dihydroxyacetone phosphate + NADH + H(+). The enzyme catalyses sn-glycerol 3-phosphate + NADP(+) = dihydroxyacetone phosphate + NADPH + H(+). The protein operates within membrane lipid metabolism; glycerophospholipid metabolism. Functionally, catalyzes the reduction of the glycolytic intermediate dihydroxyacetone phosphate (DHAP) to sn-glycerol 3-phosphate (G3P), the key precursor for phospholipid synthesis. The sequence is that of Glycerol-3-phosphate dehydrogenase [NAD(P)+] from Trichlorobacter lovleyi (strain ATCC BAA-1151 / DSM 17278 / SZ) (Geobacter lovleyi).